A 204-amino-acid polypeptide reads, in one-letter code: Large ribosomal subunit protein uL4 (204 aa).

The segment at 49–75 (TKGRSDVSGGGKKPWRQKGRGGARAGS) is disordered.

It belongs to the universal ribosomal protein uL4 family. In terms of assembly, part of the 50S ribosomal subunit.

Its function is as follows. One of the primary rRNA binding proteins, this protein initially binds near the 5'-end of the 23S rRNA. It is important during the early stages of 50S assembly. It makes multiple contacts with different domains of the 23S rRNA in the assembled 50S subunit and ribosome. Forms part of the polypeptide exit tunnel. The protein is Large ribosomal subunit protein uL4 of Campylobacter jejuni subsp. doylei (strain ATCC BAA-1458 / RM4099 / 269.97).